The primary structure comprises 417 residues: Serine hydroxymethyltransferase (417 aa).

Residues L112 and 116 to 118 (GHL) contribute to the (6S)-5,6,7,8-tetrahydrofolate site. K221 bears the N6-(pyridoxal phosphate)lysine mark. (6S)-5,6,7,8-tetrahydrofolate is bound at residue E247.

The protein belongs to the SHMT family. As to quaternary structure, homodimer. Requires pyridoxal 5'-phosphate as cofactor.

It is found in the cytoplasm. The catalysed reaction is (6R)-5,10-methylene-5,6,7,8-tetrahydrofolate + glycine + H2O = (6S)-5,6,7,8-tetrahydrofolate + L-serine. Its pathway is one-carbon metabolism; tetrahydrofolate interconversion. The protein operates within amino-acid biosynthesis; glycine biosynthesis; glycine from L-serine: step 1/1. Catalyzes the reversible interconversion of serine and glycine with tetrahydrofolate (THF) serving as the one-carbon carrier. This reaction serves as the major source of one-carbon groups required for the biosynthesis of purines, thymidylate, methionine, and other important biomolecules. Also exhibits THF-independent aldolase activity toward beta-hydroxyamino acids, producing glycine and aldehydes, via a retro-aldol mechanism. This is Serine hydroxymethyltransferase from Borreliella afzelii (strain PKo) (Borrelia afzelii).